Here is a 582-residue protein sequence, read N- to C-terminus: Hydrogen peroxide stress regulator 1 (582 aa).

Disordered stretches follow at residues 24–55, 107–154, 347–366, and 375–422; these read SPFAPAQSSSPLPSNSCREYSLPSHPSTHNSS, YPSA…GISK, TSYNDTPQQSVTGSYNSGET, and NTSG…GGKS. The segment covering 107–125 has biased composition (polar residues); the sequence is YPSASFSTSQHPSQVYNDG. Over residues 126-143 the composition is skewed to low complexity; that stretch reads STLNSNNTTQQLNNNNGF. Residues 375-392 are compositionally biased toward polar residues; it reads NTSGRSPNSMEATEQIGT. The C2H2-type 1 zinc-finger motif lies at 423 to 446; that stretch reads FVCPECSKKFKRSEHLRRHIRSLH. The C2H2-type 2; atypical zinc-finger motif lies at 452-473; it reads FVCICGKRFSRRDNLRQHERLH.

It localises to the nucleus. Transcription factor that globally supports gene expression in response to hydrogen peroxide. This is Hydrogen peroxide stress regulator 1 (hsr1) from Schizosaccharomyces pombe (strain 972 / ATCC 24843) (Fission yeast).